The following is a 63-amino-acid chain: uncharacterized protein (63 aa).

This is an uncharacterized protein from Azospirillum brasilense.